Reading from the N-terminus, the 446-residue chain is MTRRSVSRKRRANPGSGPGEQSDWDHSAHKRKRLPPEKKSLVFYLKSRELKPHNDSTYLHLLRGHAACTLPSILSEREFHLGNLNKVFASQWLNHRQVVCGTKCNTLFVVDVQTGQITRIPILKDREPINGSHQSCGIHAIEINPSRTLLATGGDNPNSIAVYRLPTLDPVCVGDGGHNDWIFSIAWISDTMAVSGSRDGSMGLWEMTDEVVNKSDFQHGLSRVPVYSHISHKALKDIPKESSNPVNCKVRALAFNSNNKELGAVSLDGFFHLWKAEQTLSKLLSTKLPYCRENVCLAYGLEWSLYAVGSQAHVSFLDPRQPPHCAKSVYCREQGSGIRSVSFYEHIVTVGTGQGALLFYDIRAQRFLEDSTGNCRNAKKKGDTLKLSTGKGWLNHNEMWLNYFSDIDCCPNAVYTHCYDSSGTKLFVAGGPLPTGLHGNYAGLWS.

Residues 1–12 (MTRRSVSRKRRA) are compositionally biased toward basic residues. The disordered stretch occupies residues 1–32 (MTRRSVSRKRRANPGSGPGEQSDWDHSAHKRK). WD repeat units lie at residues 132–173 (SHQS…PVCV), 177–215 (GHNDWIFSIAWISDTMAVSGSRDGSMGLWEMTDEVVNKS), 245–284 (PVNCKVRALAFNSNNKELGAVSLDGFFHLWKAEQTLSKLL), and 333–370 (EQGSGIRSVSFYEHIVTVGTGQGALLFYDIRAQRFLED).

The protein belongs to the WD repeat DCAF12 family. Component of the DCX(DCAF12) E3 ubiquitin ligase complex, at least composed of cul4 (cul4a or cul4b), ddb1, dcaf12 and rbx1.

It localises to the cytoplasm. The protein resides in the cytoskeleton. It is found in the microtubule organizing center. Its subcellular location is the centrosome. The protein localises to the nucleus. Its pathway is protein modification; protein ubiquitination. Functionally, substrate-recognition component of a DCX (DDB1-CUL4-X-box) E3 ubiquitin-protein ligase complex of the DesCEND (destruction via C-end degrons) pathway, which recognizes a C-degron located at the extreme C terminus of target proteins, leading to their ubiquitination and degradation. The C-degron recognized by the DesCEND pathway is usually a motif of less than ten residues and can be present in full-length proteins, truncated proteins or proteolytically cleaved forms. The DCX(DCAF12) complex specifically recognizes proteins with a diglutamate (Glu-Glu) at the C-terminus leading to their ubiquitination and degradation. Also directly recognizes the C-terminal glutamate-leucine (Glu-Leu) degron as an alternative degron in proteins leading to their ubiquitination and degradation. The sequence is that of DDB1- and CUL4-associated factor 12-A (dcaf12-a) from Xenopus laevis (African clawed frog).